Here is a 338-residue protein sequence, read N- to C-terminus: Nodulation outer protein L (338 aa).

The span at 1–14 shows a compositional bias: polar residues; that stretch reads MDINSTSPLNASPQ. Disordered stretches follow at residues 1–48, 85–158, 187–209, and 230–259; these read MDIN…LPQV, TRER…DLET, SPAP…PHAR, and PQAG…SSAG. A compositionally biased stretch (basic and acidic residues) spans 85-97; it reads TRERSPHPSEQRP. Residues 126-138 are compositionally biased toward polar residues; that stretch reads VGPSRSGPSQAGL. Over residues 242-258 the composition is skewed to polar residues; the sequence is SGPSQARPSHAWPSSSA.

The protein localises to the secreted. Functionally, putative symbiotic effector that modulates nodulation in legumes. When delivered into the plant cell, modulates the activity of signal transduction pathways that culminate in activation of PR proteins. The chain is Nodulation outer protein L (nopL) from Sinorhizobium fredii (strain NBRC 101917 / NGR234).